The following is a 66-amino-acid chain: DNA gyrase inhibitor YacG (66 aa).

4 residues coordinate Zn(2+): Cys-10, Cys-13, Cys-29, and Cys-33.

Belongs to the DNA gyrase inhibitor YacG family. Interacts with GyrB. The cofactor is Zn(2+).

Functionally, inhibits all the catalytic activities of DNA gyrase by preventing its interaction with DNA. Acts by binding directly to the C-terminal domain of GyrB, which probably disrupts DNA binding by the gyrase. In Edwardsiella ictaluri (strain 93-146), this protein is DNA gyrase inhibitor YacG.